Here is a 347-residue protein sequence, read N- to C-terminus: Protein PET130 (347 aa).

Its subcellular location is the mitochondrion matrix. In Saccharomyces cerevisiae (strain ATCC 204508 / S288c) (Baker's yeast), this protein is Protein PET130 (PET130).